Consider the following 467-residue polypeptide: Neutral protease 2 homolog NFIA_031120 (467 aa).

A signal peptide spans 1–19; sequence MKITALASAILAVVHGALA. The propeptide occupies 20-172; sequence LPARAPALDI…PASIKPLDRR (153 aa). Disulfide bonds link C179/C251 and C258/C276. Residue H300 coordinates Zn(2+). Residue E301 is part of the active site. Zn(2+) contacts are provided by H304 and D315. A compositionally biased stretch (polar residues) spans 359–451; it reads WDGNSQPGQT…TMWDGSSEPG (93 aa). The interval 359–467 is disordered; that stretch reads WDGNSQPGQT…HTTWGNFYQA (109 aa).

The protein belongs to the peptidase M35 family. Zn(2+) serves as cofactor.

The protein resides in the secreted. The catalysed reaction is Preferential cleavage of bonds with hydrophobic residues in P1'. Also 3-Asn-|-Gln-4 and 8-Gly-|-Ser-9 bonds in insulin B chain.. Secreted metalloproteinase that allows assimilation of proteinaceous substrates. Shows high activities on basic nuclear substrates such as histone and protamine. This Neosartorya fischeri (strain ATCC 1020 / DSM 3700 / CBS 544.65 / FGSC A1164 / JCM 1740 / NRRL 181 / WB 181) (Aspergillus fischerianus) protein is Neutral protease 2 homolog NFIA_031120.